The primary structure comprises 164 residues: Dynein regulatory complex protein 8 (164 aa).

2 consecutive EF-hand domains span residues 16–51 and 94–129; these read ELHKKIKDAFEVFDHESNNTVDVREIGTIIRSLGCC and AAEDILLRAFEVLDPAKRGFLTKDELVKYMTEEGEP.

The protein belongs to the DRC8 family. Component of the nexin-dynein regulatory complex (N-DRC).

It is found in the cytoplasm. Its subcellular location is the cytoskeleton. It localises to the flagellum axoneme. Its function is as follows. Component of the nexin-dynein regulatory complex (N-DRC), a key regulator of ciliary/flagellar motility which maintains the alignment and integrity of the distal axoneme and regulates microtubule sliding in motile axonemes. The sequence is that of Dynein regulatory complex protein 8 (Efcab2) from Mus musculus (Mouse).